Reading from the N-terminus, the 413-residue chain is Putative F-box/kelch-repeat protein At4g22430 (413 aa).

The F-box domain maps to 5–54; the sequence is NNTITDVLEGIVTEILVRLPLRSISRFKSVSQTWKSAIESVYFRRLFVSL. Residues 168–210 form a Kelch repeat; sequence NMFLNKGEMYMPLYVYSSETGFWIHKEVVCPVRLPNFYDPISL.

The sequence is that of Putative F-box/kelch-repeat protein At4g22430 from Arabidopsis thaliana (Mouse-ear cress).